Consider the following 155-residue polypeptide: Ribosomal RNA large subunit methyltransferase H (155 aa).

S-adenosyl-L-methionine contacts are provided by residues Leu-72, Gly-103, and 122 to 127 (LSALTL).

It belongs to the RNA methyltransferase RlmH family. In terms of assembly, homodimer.

It is found in the cytoplasm. The catalysed reaction is pseudouridine(1915) in 23S rRNA + S-adenosyl-L-methionine = N(3)-methylpseudouridine(1915) in 23S rRNA + S-adenosyl-L-homocysteine + H(+). Its function is as follows. Specifically methylates the pseudouridine at position 1915 (m3Psi1915) in 23S rRNA. The chain is Ribosomal RNA large subunit methyltransferase H from Enterobacter sp. (strain 638).